The primary structure comprises 317 residues: Transaldolase (317 aa).

Residue lysine 132 is the Schiff-base intermediate with substrate of the active site.

This sequence belongs to the transaldolase family. Type 1 subfamily. In terms of assembly, homodimer.

It is found in the cytoplasm. It catalyses the reaction D-sedoheptulose 7-phosphate + D-glyceraldehyde 3-phosphate = D-erythrose 4-phosphate + beta-D-fructose 6-phosphate. It participates in carbohydrate degradation; pentose phosphate pathway; D-glyceraldehyde 3-phosphate and beta-D-fructose 6-phosphate from D-ribose 5-phosphate and D-xylulose 5-phosphate (non-oxidative stage): step 2/3. Transaldolase is important for the balance of metabolites in the pentose-phosphate pathway. In Yersinia pseudotuberculosis serotype O:3 (strain YPIII), this protein is Transaldolase.